Reading from the N-terminus, the 520-residue chain is Probable cytochrome P450 4p2 (520 aa).

2 residues coordinate heme: E325 and C464.

The protein belongs to the cytochrome P450 family. It depends on heme as a cofactor.

Its subcellular location is the endoplasmic reticulum membrane. The protein resides in the microsome membrane. In terms of biological role, may be involved in the metabolism of insect hormones and in the breakdown of synthetic insecticides. The sequence is that of Probable cytochrome P450 4p2 (Cyp4p2) from Drosophila melanogaster (Fruit fly).